Consider the following 508-residue polypeptide: Protection of telomeres protein tpz1 (508 aa).

The interval 2-223 (SNCLKHPWLE…ENTTHGIYLE (222 aa)) is pot1-binding. Disordered stretches follow at residues 159 to 178 (QEASLSQQEKPNDNTSNSRD), 235 to 269 (VSETPEVKQEDNDEDLDAYSWSSSTDSAGEIPSLP), and 282 to 358 (PPPF…QSHR). Polar residues predominate over residues 327 to 347 (STEQLNSSLTIERSQSIQSTD). Residues 348-358 (SKQRVETQSHR) are compositionally biased toward basic and acidic residues. Residues 379-508 (TIDDSTGKLL…KKIEEFRNKS (130 aa)) form a ccq1/poz1-binding region.

As to quaternary structure, interacts with ccq1, pot1 and poz1.

It is found in the chromosome. Its subcellular location is the telomere. The protein resides in the nucleus. In terms of biological role, telomeric DNA-binding protein that is required to protect the 3'-end telomeric overhang and involved in telomere length regulation. recruits poz1 and ccq1 to telomeres, regulating telomere length negatively and positively respectively. This chain is Protection of telomeres protein tpz1 (tpz1), found in Schizosaccharomyces pombe (strain 972 / ATCC 24843) (Fission yeast).